The sequence spans 307 residues: Ribonuclease Z (307 aa).

Residues His63, His65, Asp67, His68, His141, Asp212, and His270 each contribute to the Zn(2+) site. Asp67 functions as the Proton acceptor in the catalytic mechanism.

The protein belongs to the RNase Z family. Homodimer. Zn(2+) is required as a cofactor.

The catalysed reaction is Endonucleolytic cleavage of RNA, removing extra 3' nucleotides from tRNA precursor, generating 3' termini of tRNAs. A 3'-hydroxy group is left at the tRNA terminus and a 5'-phosphoryl group is left at the trailer molecule.. In terms of biological role, zinc phosphodiesterase, which displays some tRNA 3'-processing endonuclease activity. Probably involved in tRNA maturation, by removing a 3'-trailer from precursor tRNA. This Bacillus anthracis (strain A0248) protein is Ribonuclease Z.